A 267-amino-acid chain; its full sequence is Undecaprenyl-diphosphatase (267 aa).

Transmembrane regions (helical) follow at residues 1-21 (MSYF…FLPI), 39-59 (QGLA…VLYF), 83-103 (AKLA…GFVM), 111-131 (LRSA…LWYV), 149-169 (ALFI…RSGA), 189-209 (FLMS…KLVT), 218-238 (FLLT…HFFL), and 245-265 (GMTP…AFLL).

The protein belongs to the UppP family.

The protein resides in the cell inner membrane. It catalyses the reaction di-trans,octa-cis-undecaprenyl diphosphate + H2O = di-trans,octa-cis-undecaprenyl phosphate + phosphate + H(+). Its function is as follows. Catalyzes the dephosphorylation of undecaprenyl diphosphate (UPP). Confers resistance to bacitracin. In Vibrio cholerae serotype O1 (strain ATCC 39315 / El Tor Inaba N16961), this protein is Undecaprenyl-diphosphatase.